We begin with the raw amino-acid sequence, 435 residues long: Actin-like protein 7A (435 aa).

Disordered stretches follow at residues 1–20 and 29–65; these read MWAPPAAIMGDGPAKKVGNQ and QTASLRDGPAKRAVWVRRRSSEPQEPTESKAAKERPK. The tract at residues 31–51 is required for interaction with TES; that stretch reads ASLRDGPAKRAVWVRRRSSEP. The segment covering 47–65 has biased composition (basic and acidic residues); sequence RSSEPQEPTESKAAKERPK.

This sequence belongs to the actin family. In terms of assembly, interacts (via N-terminus) with TES (via LIM domain 2). Heterodimer with TES; the heterodimer interacts with ENAH to form a heterotrimer. Interacts with ACTL9. Interacts with CYLC1; the interaction may be relevant for proper acrosome attachment to the nuclear envelope.

The protein localises to the cytoplasm. It is found in the cytoskeleton. The protein resides in the golgi apparatus. Its subcellular location is the nucleus. Essential for normal spermatogenesis and male fertility. Required for normal sperm head morphology, acroplaxome formation, acrosome attachment, and acrosome granule stability. May anchor and stabilize acrosomal adherence to the acroplaxome at least in part by facilitating the presence of F-actin in the subacrosomal space. May play an important role in formation and fusion of Golgi-derived vesicles during acrosome biogenesis. In Macaca fascicularis (Crab-eating macaque), this protein is Actin-like protein 7A (ACTL7A).